Consider the following 425-residue polypeptide: Histone-binding protein RBBP7 (425 aa).

N-acetylalanine is present on Ala-2. Ser-3 bears the Phosphoserine mark. Lys-4 bears the N6-acetyllysine; alternate mark. Lys-4 is covalently cross-linked (Glycyl lysine isopeptide (Lys-Gly) (interchain with G-Cter in SUMO2); alternate). Residue Lys-4 forms a Glycyl lysine isopeptide (Lys-Gly) (interchain with G-Cter in ubiquitin); alternate linkage. Thr-10 carries the phosphothreonine modification. WD repeat units follow at residues 47–122 (QWLP…KINH), 128–173 (RARY…LRLR), 181–217 (GLSW…KIVD), 228–269 (VVED…HLVD), 275–312 (VNCL…LHTF), 318–369 (EIFQ…LFIH), and 376–403 (ISDF…IWQM). Residue Ser-95 is modified to Phosphoserine. A Glycyl lysine isopeptide (Lys-Gly) (interchain with G-Cter in SUMO2) cross-link involves residue Lys-101. At Lys-119 the chain carries N6-acetyllysine. Lys-155 is covalently cross-linked (Glycyl lysine isopeptide (Lys-Gly) (interchain with G-Cter in SUMO2)). Lys-159 bears the N6-acetyllysine; alternate mark. Residue Lys-159 forms a Glycyl lysine isopeptide (Lys-Gly) (interchain with G-Cter in SUMO2); alternate linkage. Ser-354 bears the Phosphoserine mark.

It belongs to the WD repeat RBAP46/RBAP48/MSI1 family. As to quaternary structure, binds directly to helix 1 of the histone fold of histone H4, a region that is not accessible when H4 is in chromatin. Subunit of the type B histone acetyltransferase (HAT) complex, composed of RBBP7 and HAT1. Subunit of the core histone deacetylase (HDAC) complex, which is composed of HDAC1, HDAC2, RBBP4 and RBBP7. The core HDAC complex associates with SIN3A, ARID4B/SAP180, SAP18, SAP30, SAP130, SUDS3/SAP45 and possibly ARID4A/RBP1 and ING1 to form the SIN3 HDAC complex. Component of the nucleosome remodeling and deacetylase (NuRD) repressor complex, composed of core proteins MTA1, MTA2, MTA3, RBBP4, RBBP7, HDAC1, HDAC2, MBD2, MBD3, and peripherally associated proteins CDK2AP1, CDK2AP2, GATAD2A, GATAD2B, CHD3, CHD4 and CHD5. The exact stoichiometry of the NuRD complex is unknown, and some subunits such as MBD2 and MBD3, GATAD2A and GATAD2B, and CHD3, CHD4 and CHD5 define mutually exclusive NuRD complexes. The NuRD complex may interact with MBD3L1. The NuRD complex may interact with MBD3L2. Subunit of the PRC2/EED-EZH2 complex, which is composed of at least EED, EZH2, RBBP4, RBBP7 and SUZ12. The PRC2/EED-EZH2 complex may also associate with HDAC1. Component of the NURF-1 ISWI chromatin remodeling complex (also called the nucleosome-remodeling factor (NURF) complex) at least composed of SMARCA1, BPTF, RBBP4 and RBBP7. Within the complex interacts with SMARCA1. Component of the BPFT-SMARCA1 complex at least composed of SMARCA1, BPFT, RBBP4 and RBBP7; the complex is catalytically inactive and does not remodel chromatin. Within the complex interacts with SMARCA1. Interacts with BRCA1. Interacts with CDK2AP1. Interacts with CENPA. Interacts with CHD3. Interacts with CHD4. Interacts with CREBBP, and this interaction may be enhanced by the binding of phosphorylated CREB1 to CREBBP. Interacts with HDAC7. Interacts with MTA1. Interacts with PWWP2B. Interacts with RB1 (via viral protein-binding domain). Interacts with SUV39H1. In terms of tissue distribution, higher levels in brain, thymus, lung, spleen, kidney, testis, and ovary/uterus; lower levels in heart, liver, and muscle.

It localises to the nucleus. Functionally, core histone-binding subunit that may target chromatin remodeling factors, histone acetyltransferases and histone deacetylases to their histone substrates in a manner that is regulated by nucleosomal DNA. Component of several complexes which regulate chromatin metabolism. These include the type B histone acetyltransferase (HAT) complex, which is required for chromatin assembly following DNA replication; the core histone deacetylase (HDAC) complex, which promotes histone deacetylation and consequent transcriptional repression; the nucleosome remodeling and histone deacetylase complex (the NuRD complex), which promotes transcriptional repression by histone deacetylation and nucleosome remodeling; and the PRC2/EED-EZH2 complex, which promotes repression of homeotic genes during development; and the NURF (nucleosome remodeling factor) complex. The sequence is that of Histone-binding protein RBBP7 (Rbbp7) from Mus musculus (Mouse).